Consider the following 794-residue polypeptide: Zinc finger protein 148 (794 aa).

A Glycyl lysine isopeptide (Lys-Gly) (interchain with G-Cter in SUMO2) cross-link involves residue Lys6. Ser51 carries the phosphoserine modification. Glycyl lysine isopeptide (Lys-Gly) (interchain with G-Cter in SUMO2) cross-links involve residues Lys88, Lys115, and Lys132. The segment at 171–193 (HVCEHCNAAFRTNYHLQRHVFIH) adopts a C2H2-type 1 zinc-finger fold. At Thr194 the chain carries Phosphothreonine. 2 C2H2-type zinc fingers span residues 199-221 (FQCS…EKIH) and 227-249 (FRCD…KRTH). Ser250 bears the Phosphoserine mark. A C2H2-type 4 zinc finger spans residues 255 to 278 (YQCEYCLQYFSRTDRVLKHKRMCH). Lys291 participates in a covalent cross-link: Glycyl lysine isopeptide (Lys-Gly) (interchain with G-Cter in SUMO2). The tract at residues 298–336 (EEDSGFSTSPKDNSLPKKKRQKTEKKSSGMDKESALDKS) is disordered. Phosphoserine occurs at positions 301 and 306. Residue Lys308 forms a Glycyl lysine isopeptide (Lys-Gly) (interchain with G-Cter in SUMO2) linkage. Over residues 321-336 (EKKSSGMDKESALDKS) the composition is skewed to basic and acidic residues. Residue Lys356 forms a Glycyl lysine isopeptide (Lys-Gly) (interchain with G-Cter in SUMO1); alternate linkage. Lys356 is covalently cross-linked (Glycyl lysine isopeptide (Lys-Gly) (interchain with G-Cter in SUMO2); alternate). Lys402 is covalently cross-linked (Glycyl lysine isopeptide (Lys-Gly) (interchain with G-Cter in SUMO2)). Ser412 carries the phosphoserine modification. Glycyl lysine isopeptide (Lys-Gly) (interchain with G-Cter in SUMO2) cross-links involve residues Lys421 and Lys424. A compositionally biased stretch (polar residues) spans 574–588 (NSSEVPEVTPSENVG). Residues 574 to 599 (NSSEVPEVTPSENVGSSSQASSSDKA) form a disordered region. Position 607 is an N6-acetyllysine (Lys607). Phosphoserine occurs at positions 665 and 784.

It belongs to the krueppel C2H2-type zinc-finger protein family. Interacts with HNRNPDL. Interacts with the 5FMC complex; the interaction requires association with CHTOP. Interacts with CAVIN1. Post-translationally, sumoylated with SUMO2. Desumoylated by SENP3, resulting in the stimulation of transcription of its target genes.

Its subcellular location is the nucleus. Functionally, involved in transcriptional regulation. Represses the transcription of a number of genes including gastrin, stromelysin and enolase. Binds to the G-rich box in the enhancer region of these genes. This Pongo abelii (Sumatran orangutan) protein is Zinc finger protein 148 (ZNF148).